A 166-amino-acid chain; its full sequence is Putative esterase sll0410 (166 aa).

D45 is a catalytic residue.

The protein belongs to the 4-hydroxybenzoyl-CoA thioesterase family.

In Synechocystis sp. (strain ATCC 27184 / PCC 6803 / Kazusa), this protein is Putative esterase sll0410.